The primary structure comprises 337 residues: Glyceraldehyde-3-phosphate dehydrogenase (337 aa).

Residues 12 to 13 (RI), Asp-34, and Arg-79 contribute to the NAD(+) site. Residues 150 to 152 (SCT), Thr-181, 210 to 211 (TG), and Arg-233 each bind D-glyceraldehyde 3-phosphate. Residue Cys-151 is the Nucleophile of the active site. Position 315 (Asn-315) interacts with NAD(+).

Belongs to the glyceraldehyde-3-phosphate dehydrogenase family. As to quaternary structure, homotetramer.

The protein localises to the cytoplasm. The enzyme catalyses D-glyceraldehyde 3-phosphate + phosphate + NAD(+) = (2R)-3-phospho-glyceroyl phosphate + NADH + H(+). Its pathway is carbohydrate degradation; glycolysis; pyruvate from D-glyceraldehyde 3-phosphate: step 1/5. This chain is Glyceraldehyde-3-phosphate dehydrogenase (GPD), found in Coccidioides posadasii (strain C735) (Valley fever fungus).